A 559-amino-acid polypeptide reads, in one-letter code: Formate--tetrahydrofolate ligase (559 aa).

68-75 (TPAGEGKT) is a binding site for ATP.

Belongs to the formate--tetrahydrofolate ligase family.

It carries out the reaction (6S)-5,6,7,8-tetrahydrofolate + formate + ATP = (6R)-10-formyltetrahydrofolate + ADP + phosphate. The protein operates within one-carbon metabolism; tetrahydrofolate interconversion. This Moorella thermoacetica (strain ATCC 39073 / JCM 9320) protein is Formate--tetrahydrofolate ligase.